Reading from the N-terminus, the 92-residue chain is Sperm-specific protein Phi-1 (92 aa).

The interval 1–92 (MPSPTRRSSK…RVRAKKKKKK (92 aa)) is disordered. Composition is skewed to basic residues over residues 7–19 (RSSK…RSRS) and 29–92 (AAKR…KKKK).

As to expression, sperm.

The protein resides in the nucleus. Its subcellular location is the chromosome. In terms of biological role, involved in nuclear basic protein transition: histones are replaced by spermatid specific proteins which are themselves replaced by protamines in late spermatids. This Mytilus edulis (Blue mussel) protein is Sperm-specific protein Phi-1.